Reading from the N-terminus, the 293-residue chain is CDP-abequose synthase (293 aa).

Thr-113 contacts substrate. The active-site Proton acceptor is the Tyr-130.

This sequence belongs to the NAD(P)-dependent epimerase/dehydratase family.

It carries out the reaction CDP-alpha-D-abequose + NADP(+) = CDP-4-dehydro-3,6-dideoxy-alpha-D-glucose + NADPH + H(+). The protein operates within bacterial outer membrane biogenesis; LPS O-antigen biosynthesis. The protein is CDP-abequose synthase of Salmonella muenchen.